The primary structure comprises 75 residues: Parvalbumin beta 3 (75 aa).

At Ala1 the chain carries N-acetylalanine. An EF-hand domain is found at 26–61 (YKAFFAKKAFFVIDQDKSGFIEEDELKLFLQVFSAG). Positions 39, 41, 43, 45, 47, and 50 each coordinate Ca(2+).

The protein belongs to the parvalbumin family.

Its function is as follows. In muscle, parvalbumin is thought to be involved in relaxation after contraction. It binds two calcium ions. This chain is Parvalbumin beta 3, found in Merluccius gayi (South Pacific hake).